A 236-amino-acid chain; its full sequence is Endo-1,4-beta-xylanase 3 (236 aa).

Positions 1-45 are cleaved as a signal peptide; the sequence is MQILTWALAALAAIPAVTAAPVETVEASSMDELVERSPNVTLVAR. N-linked (GlcNAc...) asparagine glycans are attached at residues asparagine 39 and asparagine 106. One can recognise a GH11 domain in the interval 46 to 236; the sequence is GTPSSTGTHN…SSGSASMTVR (191 aa). Glutamate 131 acts as the Nucleophile in catalysis. The active-site Proton donor is glutamate 223.

The protein belongs to the glycosyl hydrolase 11 (cellulase G) family.

The protein localises to the secreted. The enzyme catalyses Endohydrolysis of (1-&gt;4)-beta-D-xylosidic linkages in xylans.. It participates in glycan degradation; xylan degradation. Functionally, endo-1,4-beta-xylanase involved in the hydrolysis of xylan, a major structural heterogeneous polysaccharide found in plant biomass representing the second most abundant polysaccharide in the biosphere, after cellulose. The protein is Endo-1,4-beta-xylanase 3 (XYL3) of Pyricularia grisea (Crabgrass-specific blast fungus).